Consider the following 198-residue polypeptide: Glycerol-3-phosphate acyltransferase (198 aa).

The next 6 membrane-spanning stretches (helical) occupy residues 1 to 21, 55 to 75, 79 to 99, 111 to 131, 136 to 156, and 158 to 178; these read MNLL…GYLA, VFLL…YLLL, WQVA…WLNW, IFLG…IIMI, IVSL…FLSF, and GSNL…LVIW.

Belongs to the PlsY family. As to quaternary structure, probably interacts with PlsX.

The protein resides in the cell inner membrane. It catalyses the reaction an acyl phosphate + sn-glycerol 3-phosphate = a 1-acyl-sn-glycero-3-phosphate + phosphate. It participates in lipid metabolism; phospholipid metabolism. In terms of biological role, catalyzes the transfer of an acyl group from acyl-phosphate (acyl-PO(4)) to glycerol-3-phosphate (G3P) to form lysophosphatidic acid (LPA). This enzyme utilizes acyl-phosphate as fatty acyl donor, but not acyl-CoA or acyl-ACP. The protein is Glycerol-3-phosphate acyltransferase of Prochlorococcus marinus (strain NATL2A).